Here is a 170-residue protein sequence, read N- to C-terminus: Lipoprotein signal peptidase (170 aa).

3 consecutive transmembrane segments (helical) span residues 13 to 33, 72 to 92, and 96 to 113; these read IFIS…VKYI, LFFL…ALKE, and IARI…GNII. Catalysis depends on residues Asp-124 and Asp-146. The chain crosses the membrane as a helical span at residues 142–162; that stretch reads FNFADSYVVIGITLFIIYDLF.

This sequence belongs to the peptidase A8 family.

It localises to the cell inner membrane. The catalysed reaction is Release of signal peptides from bacterial membrane prolipoproteins. Hydrolyzes -Xaa-Yaa-Zaa-|-(S,diacylglyceryl)Cys-, in which Xaa is hydrophobic (preferably Leu), and Yaa (Ala or Ser) and Zaa (Gly or Ala) have small, neutral side chains.. It participates in protein modification; lipoprotein biosynthesis (signal peptide cleavage). Functionally, this protein specifically catalyzes the removal of signal peptides from prolipoproteins. This is Lipoprotein signal peptidase from Borrelia turicatae (strain 91E135).